The chain runs to 353 residues: Rhodopsin (353 aa).

At 1–36 (MNGTEGPFFYVPMLNTTGIVRSPYDYPQYYLVNPAA) the chain is on the extracellular side. Asn2 and Asn15 each carry an N-linked (GlcNAc...) asparagine glycan. The chain crosses the membrane as a helical span at residues 37–61 (YAALGAYMFLLILLGFPINFLTLYV). At 62–73 (TIEHKKLRTPLN) the chain is on the cytoplasmic side. A helical transmembrane segment spans residues 74-96 (YILLNLAVANLFMVFGGFTTTMY). Residues 97–110 (TSMHGYFVLGRLGC) are Extracellular-facing. A disulfide bridge links Cys110 with Cys187. A helical transmembrane segment spans residues 111-133 (NLEGFFATLGGEIGLWSLVVLAI). The short motif at 134–136 (ERW) is the 'Ionic lock' involved in activated form stabilization element. At 134–152 (ERWMVVCKPISNFRFGENH) the chain is on the cytoplasmic side. A helical membrane pass occupies residues 153-173 (AIMGLAFTWIMACACAVPPLV). Topologically, residues 174–202 (GWSRYIPEGMQCSCGVDYYTRAEGFNNES) are extracellular. Residue Asn200 is glycosylated (N-linked (GlcNAc...) asparagine). Residues 203–224 (FVVYMFICHFLIPMAVVFFCYG) form a helical membrane-spanning segment. Topologically, residues 225-252 (RLLCAVKEAAAAQQESETTQRAEREVTR) are cytoplasmic. A helical transmembrane segment spans residues 253-274 (MVVIMVVAFLICWLPYAGVAWW). Over 275–286 (IFTHQGSEFGPV) the chain is Extracellular. Residues 287–308 (FMTIPAFFAKSSSIYNPLIYIC) form a helical membrane-spanning segment. An N6-(retinylidene)lysine modification is found at Lys296. At 309 to 353 (MNKQFRHCMITTLCCGKNPFEEEEGASTTSKTEASSVSSSSVSPA) the chain is on the cytoplasmic side. S-palmitoyl cysteine attachment occurs at residues Cys322 and Cys323. The interval 330–353 (EEEGASTTSKTEASSVSSSSVSPA) is disordered. Positions 334 to 353 (ASTTSKTEASSVSSSSVSPA) are enriched in low complexity.

Belongs to the G-protein coupled receptor 1 family. Opsin subfamily. Post-translationally, phosphorylated on some or all of the serine and threonine residues present in the C-terminal region. In terms of processing, contains one covalently linked retinal chromophore.

It is found in the membrane. The protein localises to the cell projection. Its subcellular location is the cilium. It localises to the photoreceptor outer segment. Its function is as follows. Photoreceptor required for image-forming vision at low light intensity. While most salt water fish species use retinal as chromophore, most freshwater fish use 3-dehydroretinal, or a mixture of retinal and 3-dehydroretinal. Light-induced isomerization of 11-cis to all-trans retinal triggers a conformational change that activates signaling via G-proteins. Subsequent receptor phosphorylation mediates displacement of the bound G-protein alpha subunit by arrestin and terminates signaling. The chain is Rhodopsin (rho) from Tetraodon nigroviridis (Spotted green pufferfish).